The primary structure comprises 997 residues: MIGSVLTKVFGTSNERVVKRLLPIVEQIGALEPEIEKLSDEQLRAKTAEFRAYIAKAVEGVDDEDEQHKAIQRALDDLMPEAFAVVREAGRRVLHMRHFDVQLIGGMVLHQGKIAEMKTGEGKTLVATLPCYLNALAGRGVHVVTVNDYLAKRDAEWMGKIYEFLGLTVGVIVHDLDDEQRRQAYAADITYGTNNEFGFDYLRDNMKFDLKDCVQRKHFYCIVDEVDSILIDEARTPLIISGPTDQTTDKYVRVNRIIPALEQGEEIEKGEEKILTGDFVVDEKHKTISVTDEGWEKIEQLLGIGNIADPENWDLKHHVETAIKAHSLYKRDVQYVVKDGEVIIVDEFTGRLMPGRRWSDGLHQSVEAKEGVNIRREDQTLATITFQNYFRLYKKLSGMTGTAETEAAEFDKIYKLEIVVIPTNRPLLRVENPDVVFRTTQEKYFAVADQIAELNKNNQPVLVGTTSIEKSELLSQILVRKGVKHVVLNAKYHEREAEIVAQAGRLGMVTIATNMAGRGTDILLGGNADFMAKQELLKKGMARSISPAEGAINPMAAQGMLRFYYQGQEFETTQENWDRVFAQHSASVAQEREQVLAAGGLYIIGTERHESRRVDNQLRGRAGRQGDPGASRFYLSLEDDLMRIFAREWVSTLLQRLGMEEGVPIESRMISNRIEKAQMAVEGQNFEARKHLLEYDDVMNKQREAVYGLRNQLLAGLDQKELIVEDYVPNILSGIFDEYAPEKQHADQWNWEEIRKKLIDHFGFDYQVDGLDVADLTRHELGEEVFSRLKERYLAKEQFIGEEPMRYHERMIMLSVLDGLWKDHLLNMDHLKEGIGLRGYGQQDPLIEYKRESFDMFEAMMNRFQEDTVRYLYLMQIVGPDGQPMQVPTRLRPADASPNGVVHAEPAPLNGSAPIPEQAAPPPPPAIPTRQPSTTIDAIEREFEKKKQQELSHARMAGGGDGSDAVNTRRVGEKVGRNDPCPCGSGKKYKKCHGAEA.

ATP contacts are provided by residues Q102, 120–124, and D521; that span reads GEGKT. The tract at residues 893 to 997 is disordered; sequence PADASPNGVV…KYKKCHGAEA (105 aa). Residues 938–953 are compositionally biased toward basic and acidic residues; the sequence is AIEREFEKKKQQELSH. Zn(2+) is bound by residues C981, C983, C992, and H993. The span at 987–997 shows a compositional bias: basic residues; it reads KKYKKCHGAEA.

This sequence belongs to the SecA family. As to quaternary structure, monomer and homodimer. Part of the essential Sec protein translocation apparatus which comprises SecA, SecYEG and auxiliary proteins SecDF. Other proteins may also be involved. Zn(2+) is required as a cofactor.

Its subcellular location is the cell inner membrane. It is found in the cytoplasm. It catalyses the reaction ATP + H2O + cellular proteinSide 1 = ADP + phosphate + cellular proteinSide 2.. Its function is as follows. Part of the Sec protein translocase complex. Interacts with the SecYEG preprotein conducting channel. Has a central role in coupling the hydrolysis of ATP to the transfer of proteins into and across the cell membrane, serving as an ATP-driven molecular motor driving the stepwise translocation of polypeptide chains across the membrane. This chain is Protein translocase subunit SecA, found in Acidobacterium capsulatum (strain ATCC 51196 / DSM 11244 / BCRC 80197 / JCM 7670 / NBRC 15755 / NCIMB 13165 / 161).